Consider the following 298-residue polypeptide: Tyrosine recombinase XerC (298 aa).

Residues 2–88 (TDLHTDVERY…ALRSFFDWLV (87 aa)) form the Core-binding (CB) domain. A Tyr recombinase domain is found at 109–288 (HLPKNIDVDD…DFQHLASVYD (180 aa)). Catalysis depends on residues R148, K172, H240, R243, and H266. Catalysis depends on Y275, which acts as the O-(3'-phospho-DNA)-tyrosine intermediate.

This sequence belongs to the 'phage' integrase family. XerC subfamily. Forms a cyclic heterotetrameric complex composed of two molecules of XerC and two molecules of XerD, in which XerC interacts with XerD via its C-terminal region, XerD interacts with XerC via its C-terminal region and so on.

The protein resides in the cytoplasm. Its activity is regulated as follows. FtsK may regulate the catalytic switch between XerC and XerD in the heterotetrameric complex during the two steps of the recombination process. In terms of biological role, site-specific tyrosine recombinase, which acts by catalyzing the cutting and rejoining of the recombining DNA molecules. Binds cooperatively to specific DNA consensus sequences that are separated from XerD binding sites by a short central region, forming the heterotetrameric XerC-XerD complex that recombines DNA substrates. The complex is essential to convert dimers of the bacterial chromosome into monomers to permit their segregation at cell division. It also contributes to the segregational stability of plasmids. In the complex XerC specifically exchanges the top DNA strands. The sequence is that of Tyrosine recombinase XerC from Escherichia coli O157:H7.